The following is a 331-amino-acid chain: uncharacterized protein (331 aa).

5 Pentapeptide repeat domains span residues 50–89, 90–129, 140–179, 185–224, and 230–269; these read ENLQ…RLGH, CQMN…NFKG, ANLR…NLQE, ANLR…KLTG, and TNLS…NLTQ.

This is an uncharacterized protein from Synechocystis sp. (strain ATCC 27184 / PCC 6803 / Kazusa).